The primary structure comprises 169 residues: NADH-quinone oxidoreductase subunit B (169 aa).

Positions 42, 43, 107, and 136 each coordinate [4Fe-4S] cluster.

The protein belongs to the complex I 20 kDa subunit family. In terms of assembly, NDH-1 is composed of 14 different subunits. Subunits NuoB, C, D, E, F, and G constitute the peripheral sector of the complex. The cofactor is [4Fe-4S] cluster.

Its subcellular location is the cell inner membrane. It carries out the reaction a quinone + NADH + 5 H(+)(in) = a quinol + NAD(+) + 4 H(+)(out). Its function is as follows. NDH-1 shuttles electrons from NADH, via FMN and iron-sulfur (Fe-S) centers, to quinones in the respiratory chain. Couples the redox reaction to proton translocation (for every two electrons transferred, four hydrogen ions are translocated across the cytoplasmic membrane), and thus conserves the redox energy in a proton gradient. This chain is NADH-quinone oxidoreductase subunit B, found in Campylobacter hominis (strain ATCC BAA-381 / DSM 21671 / CCUG 45161 / LMG 19568 / NCTC 13146 / CH001A).